Here is a 38-residue protein sequence, read N- to C-terminus: Photosystem II reaction center protein L (38 aa).

Residues S17–F37 traverse the membrane as a helical segment.

This sequence belongs to the PsbL family. PSII is composed of 1 copy each of membrane proteins PsbA, PsbB, PsbC, PsbD, PsbE, PsbF, PsbH, PsbI, PsbJ, PsbK, PsbL, PsbM, PsbT, PsbX, PsbY, PsbZ, Psb30/Ycf12, at least 3 peripheral proteins of the oxygen-evolving complex and a large number of cofactors. It forms dimeric complexes.

The protein localises to the plastid. It is found in the chloroplast thylakoid membrane. One of the components of the core complex of photosystem II (PSII). PSII is a light-driven water:plastoquinone oxidoreductase that uses light energy to abstract electrons from H(2)O, generating O(2) and a proton gradient subsequently used for ATP formation. It consists of a core antenna complex that captures photons, and an electron transfer chain that converts photonic excitation into a charge separation. This subunit is found at the monomer-monomer interface and is required for correct PSII assembly and/or dimerization. The sequence is that of Photosystem II reaction center protein L from Zygnema circumcarinatum (Green alga).